The primary structure comprises 354 residues: Uroporphyrinogen decarboxylase (354 aa).

Residues Arg-27–Arg-31, Phe-46, Asp-77, Tyr-154, Ser-209, and His-327 each bind substrate.

It belongs to the uroporphyrinogen decarboxylase family. In terms of assembly, homodimer.

The protein resides in the cytoplasm. It carries out the reaction uroporphyrinogen III + 4 H(+) = coproporphyrinogen III + 4 CO2. It functions in the pathway porphyrin-containing compound metabolism; protoporphyrin-IX biosynthesis; coproporphyrinogen-III from 5-aminolevulinate: step 4/4. In terms of biological role, catalyzes the decarboxylation of four acetate groups of uroporphyrinogen-III to yield coproporphyrinogen-III. The chain is Uroporphyrinogen decarboxylase from Shewanella oneidensis (strain ATCC 700550 / JCM 31522 / CIP 106686 / LMG 19005 / NCIMB 14063 / MR-1).